A 954-amino-acid polypeptide reads, in one-letter code: Glycine dehydrogenase (decarboxylating) (954 aa).

Residue Lys-701 is modified to N6-(pyridoxal phosphate)lysine.

It belongs to the GcvP family. As to quaternary structure, the glycine cleavage system is composed of four proteins: P, T, L and H. The cofactor is pyridoxal 5'-phosphate.

It carries out the reaction N(6)-[(R)-lipoyl]-L-lysyl-[glycine-cleavage complex H protein] + glycine + H(+) = N(6)-[(R)-S(8)-aminomethyldihydrolipoyl]-L-lysyl-[glycine-cleavage complex H protein] + CO2. The glycine cleavage system catalyzes the degradation of glycine. The P protein binds the alpha-amino group of glycine through its pyridoxal phosphate cofactor; CO(2) is released and the remaining methylamine moiety is then transferred to the lipoamide cofactor of the H protein. In Bordetella pertussis (strain Tohama I / ATCC BAA-589 / NCTC 13251), this protein is Glycine dehydrogenase (decarboxylating).